The primary structure comprises 362 residues: mRNA decay activator protein ZFP36L2 (362 aa).

The segment covering 100–109 has biased composition (basic and acidic residues); the sequence is SFSENGERSQ. Residues 100–126 are disordered; the sequence is SFSENGERSQHLLHLQQQQQQKAGAQV. Positions 111-120 are enriched in low complexity; sequence LLHLQQQQQQ. The RNA-binding motif lies at 130–135; the sequence is RYKTEL. 2 C3H1-type zinc fingers span residues 130–158 and 168–196; these read RYKTELCRPFEESGACKYGEKCQFAHGFH and KYKTELCRTFHTIGFCPYGPRCHFIHNAE. Residues 147–188 form an RNA-binding region; that stretch reads YGEKCQFAHGFHELRSLTRHPKYKTELCRTFHTIGFCPYGPR. Disordered regions lie at residues 225–244 and 306–362; these read DSPLLESPTSRTPPPQSSSS and SESP…ISDD. Residues 327–346 are compositionally biased toward low complexity; it reads YLSGSLSSGSLSGSDSPTLD.

Post-translationally, phosphorylated.

The protein resides in the nucleus. It is found in the cytoplasm. Zinc-finger RNA-binding protein that destabilizes several cytoplasmic AU-rich element (ARE)-containing mRNA transcripts by promoting their poly(A) tail removal or deadenylation, and hence provide a mechanism for attenuating protein synthesis. Acts as a 3'-untranslated region (UTR) ARE mRNA-binding adapter protein to communicate signaling events to the mRNA decay machinery. Functions by recruiting the CCR4-NOT deadenylase complex and probably other components of the cytoplasmic RNA decay machinery to the bound ARE-containing mRNAs, and hence promotes ARE-mediated mRNA deadenylation and decay processes. Binds to 3'-UTR ARE of numerous mRNAs. Also induces the degradation of ARE-containing mRNAs even in absence of poly(A) tail. Required for tubulogenesis during pronephros development. This Xenopus tropicalis (Western clawed frog) protein is mRNA decay activator protein ZFP36L2 (zfp36l2).